Consider the following 130-residue polypeptide: Large ribosomal subunit protein bL17 (130 aa).

The protein belongs to the bacterial ribosomal protein bL17 family. Part of the 50S ribosomal subunit. Contacts protein L32.

In Buchnera aphidicola subsp. Acyrthosiphon pisum (strain 5A), this protein is Large ribosomal subunit protein bL17.